The following is a 300-amino-acid chain: Putative 1-phosphofructokinase (300 aa).

Residues 214 to 219 (SDGAQG) and 246 to 247 (GD) each bind ATP. Asp247 serves as the catalytic Proton acceptor.

The protein belongs to the carbohydrate kinase PfkB family.

It carries out the reaction beta-D-fructose 1-phosphate + ATP = beta-D-fructose 1,6-bisphosphate + ADP + H(+). Functionally, catalyzes the ATP-dependent phosphorylation of fructose-l-phosphate to fructose-l,6-bisphosphate. The protein is Putative 1-phosphofructokinase (fruK) of Mycoplasma pneumoniae (strain ATCC 29342 / M129 / Subtype 1) (Mycoplasmoides pneumoniae).